We begin with the raw amino-acid sequence, 208 residues long: MLSRAMKNLLTQLRQQGIEDERLLAAISAVPRERFVDEALAHKAYENTALPIGYGQTISQPYIVARMTELLQLTPDAKILEIGTGSGYQTAILAHLVKHVFSVERIKGLQWQAKRRLKQLDLHNVSTRHGDGWQGWPSRGLFDAIIVTAAPPYIPQELMLQLTDGGVMVLPVGEHTQILKSVKRHGNGFHSEVIEAVRFVPLVQGELA.

The active site involves Ser-59.

Belongs to the methyltransferase superfamily. L-isoaspartyl/D-aspartyl protein methyltransferase family.

The protein localises to the cytoplasm. The enzyme catalyses [protein]-L-isoaspartate + S-adenosyl-L-methionine = [protein]-L-isoaspartate alpha-methyl ester + S-adenosyl-L-homocysteine. Catalyzes the methyl esterification of L-isoaspartyl residues in peptides and proteins that result from spontaneous decomposition of normal L-aspartyl and L-asparaginyl residues. It plays a role in the repair and/or degradation of damaged proteins. This chain is Protein-L-isoaspartate O-methyltransferase, found in Photorhabdus laumondii subsp. laumondii (strain DSM 15139 / CIP 105565 / TT01) (Photorhabdus luminescens subsp. laumondii).